We begin with the raw amino-acid sequence, 103 residues long: Histone H4.1 (103 aa).

A compositionally biased stretch (gly residues) spans 1 to 14 (MSGRGKGGKGLGKG). The tract at residues 1 to 20 (MSGRGKGGKGLGKGGAKRHR) is disordered. Lys6 carries the post-translational modification N6-acetyl-N6-methyllysine; alternate. Lys6, Lys9, and Lys13 each carry N6-methyllysine; alternate. N6-acetyl-N6-methyllysine; alternate is present on Lys13. The DNA-binding element occupies 17 to 21 (KRHRK). An N6-glutaryllysine modification is found at Lys92.

The protein belongs to the histone H4 family. In terms of assembly, the nucleosome is a histone octamer containing two molecules each of H2A, H2B, H3 and H4 assembled in one H3-H4 heterotetramer and two H2A-H2B heterodimers. The octamer wraps approximately 147 bp of DNA. Glutarylation at Lys-92 (H4K91glu) destabilizes nucleosomes by promoting dissociation of the H2A-H2B dimers from nucleosomes.

The protein localises to the nucleus. It localises to the chromosome. Its function is as follows. Core component of nucleosome. Nucleosomes wrap and compact DNA into chromatin, limiting DNA accessibility to the cellular machineries which require DNA as a template. Histones thereby play a central role in transcription regulation, DNA repair, DNA replication and chromosomal stability. DNA accessibility is regulated via a complex set of post-translational modifications of histones, also called histone code, and nucleosome remodeling. In Emericella nidulans (strain FGSC A4 / ATCC 38163 / CBS 112.46 / NRRL 194 / M139) (Aspergillus nidulans), this protein is Histone H4.1 (hhfA).